The primary structure comprises 550 residues: Retron Ec78 probable ATPase (550 aa).

The short motif at 93-100 (GNNGKGKT) is the ATP-binding element.

Its function is as follows. Probable ATPase component of antiviral defense system retron Ec78, composed of a non-coding RNA (ncRNA), a reverse transcriptase (RT), this protein and a putative HNH endonuclease. Expression of retron Ec78 confers protection against bacteriophage T5. At multiplicity of infection (MOI) of 0.02 cultures slow growth when infected with T5 but do not collapse, at MOI 2 cultures enter growth stasis. The sequence is that of Retron Ec78 probable ATPase from Escherichia coli.